A 99-amino-acid chain; its full sequence is Acylphosphatase (99 aa).

Positions 10–99 constitute an Acylphosphatase-like domain; sequence RLTAFVHGHV…PRGVEGFTER (90 aa). Active-site residues include arginine 25 and asparagine 43.

Belongs to the acylphosphatase family.

The catalysed reaction is an acyl phosphate + H2O = a carboxylate + phosphate + H(+). The polypeptide is Acylphosphatase (acyP) (Corynebacterium efficiens (strain DSM 44549 / YS-314 / AJ 12310 / JCM 11189 / NBRC 100395)).